The primary structure comprises 255 residues: RNA polymerase sigma-F factor (255 aa).

The Polymerase core binding signature appears at 61 to 74 (DLFQIGCIGLLKSV). The H-T-H motif DNA-binding region spans 221–240 (QSEVADRLGISQVQVSRLEK).

The protein belongs to the sigma-70 factor family.

Sigma factors are initiation factors that promote the attachment of RNA polymerase to specific initiation sites and are then released. This sigma factor is responsible for the expression of sporulation specific genes. The polypeptide is RNA polymerase sigma-F factor (sigF) (Bacillus licheniformis).